The primary structure comprises 587 residues: Heavy metal-associated isoprenylated plant protein 33 (587 aa).

An HMA domain is found at 9–72 (IQTCVLKVNI…KLLKSGKHAE (64 aa)). Cysteine 20 and cysteine 23 together coordinate a metal cation. Disordered regions lie at residues 98–146 (QIDH…MVIP), 176–261 (LKLP…KPMM), 287–449 (AHKN…PMSN), 462–504 (PGGG…QQQQ), and 532–587 (YARP…CNIM). Composition is skewed to gly residues over residues 104 to 113 (KGGGGGGGGP) and 121 to 140 (KIGGGGGGGGGGGGGGGGGP). A compositionally biased stretch (low complexity) spans 194 to 208 (PMNKNPQMPNNPNQK). Acidic residues predominate over residues 215–248 (PDDDDEEDFSDEFDDEFDEDDDEFDDDLEDDEFD). 3 stretches are compositionally biased toward gly residues: residues 290–300 (NGGGPGPAGGK), 312–419 (MGGG…GGGP), and 428–445 (GAMGGPMGSLPQMGGGPG). Residues 471 to 483 (SAEAPPGYFQGQV) are compositionally biased toward low complexity. Pro residues-rich tracts occupy residues 534 to 547 (RPPPAVNYMPPQPQ) and 554 to 565 (YPYPYPYPPQYP). Residues 578-587 (DENTSSCNIM) are compositionally biased toward polar residues. The residue at position 584 (cysteine 584) is a Cysteine methyl ester. Cysteine 584 carries the S-farnesyl cysteine lipid modification. Positions 585 to 587 (NIM) are cleaved as a propeptide — removed in mature form.

Belongs to the HIPP family.

Its function is as follows. Heavy-metal-binding protein. This is Heavy metal-associated isoprenylated plant protein 33 from Arabidopsis thaliana (Mouse-ear cress).